The chain runs to 399 residues: Chalcone synthase 2 (399 aa).

Cys-166 is a catalytic residue.

Belongs to the thiolase-like superfamily. Chalcone/stilbene synthases family.

The enzyme catalyses (E)-4-coumaroyl-CoA + 3 malonyl-CoA + 3 H(+) = 2',4,4',6'-tetrahydroxychalcone + 3 CO2 + 4 CoA. The protein operates within secondary metabolite biosynthesis; flavonoid biosynthesis. The primary product of this enzyme is 4,2',4',6'-tetrahydroxychalcone (also termed naringenin-chalcone or chalcone) which can under specific conditions spontaneously isomerize into naringenin. Substrate preference is feruloyl-CoA = caffeoyl-CoA &gt;&gt; cinnamoyl-CoA. The sequence is that of Chalcone synthase 2 (CHS2) from Hordeum vulgare (Barley).